A 174-amino-acid polypeptide reads, in one-letter code: Large ribosomal subunit protein uL16 (174 aa).

The protein belongs to the universal ribosomal protein uL16 family.

The protein is Large ribosomal subunit protein uL16 of Methanocaldococcus jannaschii (strain ATCC 43067 / DSM 2661 / JAL-1 / JCM 10045 / NBRC 100440) (Methanococcus jannaschii).